Here is a 399-residue protein sequence, read N- to C-terminus: 4-hydroxy-3-methylbut-2-enyl diphosphate reductase (399 aa).

Residue Cys66 coordinates [4Fe-4S] cluster. His96 is a binding site for (2E)-4-hydroxy-3-methylbut-2-enyl diphosphate. Position 96 (His96) interacts with dimethylallyl diphosphate. An isopentenyl diphosphate-binding site is contributed by His96. Residue Cys157 coordinates [4Fe-4S] cluster. His185 is a (2E)-4-hydroxy-3-methylbut-2-enyl diphosphate binding site. A dimethylallyl diphosphate-binding site is contributed by His185. His185 is an isopentenyl diphosphate binding site. Catalysis depends on Glu187, which acts as the Proton donor. (2E)-4-hydroxy-3-methylbut-2-enyl diphosphate is bound at residue Thr250. A [4Fe-4S] cluster-binding site is contributed by Cys288. (2E)-4-hydroxy-3-methylbut-2-enyl diphosphate-binding residues include Ser317, Ser318, Asn319, and Ser380. Positions 317, 318, 319, and 380 each coordinate dimethylallyl diphosphate. Positions 317, 318, 319, and 380 each coordinate isopentenyl diphosphate.

The protein belongs to the IspH family. [4Fe-4S] cluster serves as cofactor.

The enzyme catalyses isopentenyl diphosphate + 2 oxidized [2Fe-2S]-[ferredoxin] + H2O = (2E)-4-hydroxy-3-methylbut-2-enyl diphosphate + 2 reduced [2Fe-2S]-[ferredoxin] + 2 H(+). The catalysed reaction is dimethylallyl diphosphate + 2 oxidized [2Fe-2S]-[ferredoxin] + H2O = (2E)-4-hydroxy-3-methylbut-2-enyl diphosphate + 2 reduced [2Fe-2S]-[ferredoxin] + 2 H(+). Its pathway is isoprenoid biosynthesis; dimethylallyl diphosphate biosynthesis; dimethylallyl diphosphate from (2E)-4-hydroxy-3-methylbutenyl diphosphate: step 1/1. It functions in the pathway isoprenoid biosynthesis; isopentenyl diphosphate biosynthesis via DXP pathway; isopentenyl diphosphate from 1-deoxy-D-xylulose 5-phosphate: step 6/6. In terms of biological role, catalyzes the conversion of 1-hydroxy-2-methyl-2-(E)-butenyl 4-diphosphate (HMBPP) into a mixture of isopentenyl diphosphate (IPP) and dimethylallyl diphosphate (DMAPP). Acts in the terminal step of the DOXP/MEP pathway for isoprenoid precursor biosynthesis. In Synechococcus sp. (strain CC9605), this protein is 4-hydroxy-3-methylbut-2-enyl diphosphate reductase.